We begin with the raw amino-acid sequence, 81 residues long: uncharacterized protein (81 aa).

An N-terminal signal peptide occupies residues 1-20; it reads MIDDHEALLLLVLSSGPAAL.

This is an uncharacterized protein from Treponema pallidum (strain Nichols).